Consider the following 500-residue polypeptide: L-arabinose isomerase (500 aa).

Mn(2+) is bound by residues Glu-306, Glu-333, His-350, and His-450.

Belongs to the arabinose isomerase family. In terms of assembly, homohexamer. Mn(2+) serves as cofactor.

The catalysed reaction is beta-L-arabinopyranose = L-ribulose. The protein operates within carbohydrate degradation; L-arabinose degradation via L-ribulose; D-xylulose 5-phosphate from L-arabinose (bacterial route): step 1/3. Functionally, catalyzes the conversion of L-arabinose to L-ribulose. This Klebsiella pneumoniae (strain 342) protein is L-arabinose isomerase.